A 218-amino-acid polypeptide reads, in one-letter code: Ribonuclease S-7 (218 aa).

An N-terminal signal peptide occupies residues 1–22 (MLNSPLTSVLFVLLFVLSPIYG). Gln-32 is an RNA binding site. A disulfide bridge links Cys-38 with Cys-43. Asn-49 carries N-linked (GlcNAc...) asparagine glycosylation. His-53 serves as a coordination point for RNA. His-53 (proton donor) is an active-site residue. Asn-59 carries an N-linked (GlcNAc...) asparagine glycan. The cysteines at positions 67 and 116 are disulfide-linked. RNA-binding positions include 91–92 (DL), Phe-105, 108–109 (HE), and 112–113 (KH). Glu-109 is a catalytic residue. His-113 (proton acceptor) is an active-site residue. Asn-162 is a glycosylation site (N-linked (GlcNAc...) asparagine). Cystine bridges form between Cys-177–Cys-207 and Cys-190–Cys-201.

Belongs to the RNase T2 family.

Its subcellular location is the secreted. The protein localises to the extracellular space. It carries out the reaction a ribonucleotidyl-ribonucleotide-RNA + H2O = a 3'-end 3'-phospho-ribonucleotide-RNA + a 5'-end dephospho-ribonucleoside-RNA + H(+). In terms of biological role, self-incompatibility (SI) is the inherited ability of a flowering plant to prevent self-fertilization by discriminating between self and non-self pollen during pollination. In many species of the Solanaceae, self-incompatibility is controlled by the single, multiallelic locus S. This stylar glycoprotein is associated with expression of self-incompatibility in potato. This Nicotiana alata (Winged tobacco) protein is Ribonuclease S-7.